Reading from the N-terminus, the 232-residue chain is Small ribosomal subunit protein uS3 (232 aa).

Residues valine 39–arginine 107 enclose the KH type-2 domain.

The protein belongs to the universal ribosomal protein uS3 family. As to quaternary structure, part of the 30S ribosomal subunit. Forms a tight complex with proteins S10 and S14.

In terms of biological role, binds the lower part of the 30S subunit head. Binds mRNA in the 70S ribosome, positioning it for translation. This chain is Small ribosomal subunit protein uS3, found in Yersinia pseudotuberculosis serotype O:1b (strain IP 31758).